We begin with the raw amino-acid sequence, 117 residues long: Large ribosomal subunit protein uL18 (117 aa).

Belongs to the universal ribosomal protein uL18 family. Part of the 50S ribosomal subunit; part of the 5S rRNA/L5/L18/L25 subcomplex. Contacts the 5S and 23S rRNAs.

Functionally, this is one of the proteins that bind and probably mediate the attachment of the 5S RNA into the large ribosomal subunit, where it forms part of the central protuberance. The chain is Large ribosomal subunit protein uL18 from Francisella tularensis subsp. novicida (strain U112).